Consider the following 1117-residue polypeptide: Guanylate cyclase D (1117 aa).

The signal sequence occupies residues 1 to 66 (MAGLQQGCHF…ADSLSLLAWA (66 aa)). Topologically, residues 67–479 (RETFTLGVLG…CIRGVQPLGS (413 aa)) are extracellular. Cys-121 and Cys-149 are oxidised to a cystine. The helical transmembrane segment at 480–500 (LLTLTIACVLALVGGFLAYFI) threads the bilayer. The Cytoplasmic portion of the chain corresponds to 501–1117 (RLGLQQLRLL…RKSGEAGPGP (617 aa)). The interval 529–557 (TPSRRRPHVDSGSESRSVVDGGSPRSVTQ) is disordered. Positions 541–812 (SESRSVVDGG…PSLDQIYTQF (272 aa)) constitute a Protein kinase domain. The segment at 874-915 (MGTTVEPEYFDQVTIYFSDIVGFTTISALSEPIEVVGFLNDL) is interaction with NCALD. Positions 887-1017 (TIYFSDIVGF…DTVNTASRME (131 aa)) constitute a Guanylate cyclase domain. Positions 1096–1117 (GFAKARQGLAEPRKSGEAGPGP) are disordered.

Belongs to the adenylyl cyclase class-4/guanylyl cyclase family. Interacts (via the catalytic domain) with NCALD. Found in a subset of olfactory neurons in the main olfactory epithelium.

Its subcellular location is the cell projection. The protein resides in the cilium membrane. It catalyses the reaction GTP = 3',5'-cyclic GMP + diphosphate. Its activity is regulated as follows. Activated by Ca(2+). Its function is as follows. Functions as an olfactory receptor activated by urine odorants, uroguanylin and guanylin and as well by the volatile semiochemicals carbon disulfide (CS2) and carbon dioxide (CO2). Has guanylate cyclase activity upon binding of the ligand. Activation of GUCY2D neurons leads to the cGMP-dependent activation of the CNGA3 channels, membrane depolarization and an increase in action potential frequency. Signaling pathways activated by GUCY2D may trigger social behaviors such as acquisition of food preference. The chain is Guanylate cyclase D from Mus musculus (Mouse).